Consider the following 391-residue polypeptide: MNFNKKTIEDIEVSGKKVLVRCDFNVPLKDGVITDENRLVGALPTIKYLVEKGAKVILCSHLGKDASKSLAPVATRLSEMLGKEVVFARDEEVVGENAKKAVSEMKDGDIVLLENTRCRKEETKNIPEFSKELASLADVFVNDAFGTAHRAHCSTVGVTDYLDTAVCGYLIQKELKFLGNAVESPVRPFVAILGGAKVSDKIAVINNLLDKVNTIIIGGGMAYTFLKAQGYEIGTSLVEEDRLEYAKEMVAKAAEKGVKFLLPVDHRVAAEFKDVEATITEDQNIPVGNMGLDIGPKTETLYADAIKDAKTVIWNGPMGVFEFENYNKGTIAVAKAMADADATTIIGGGDSAAAVNILGFGDKMTHISTGGGASLEFLEGKVLPGIAALND.

Substrate contacts are provided by residues 23-25, R38, 61-64, R117, and R150; these read DFN and HLGK. ATP is bound by residues K201, G291, E322, and 348–351; that span reads GGDS.

It belongs to the phosphoglycerate kinase family. In terms of assembly, monomer.

Its subcellular location is the cytoplasm. It carries out the reaction (2R)-3-phosphoglycerate + ATP = (2R)-3-phospho-glyceroyl phosphate + ADP. It functions in the pathway carbohydrate degradation; glycolysis; pyruvate from D-glyceraldehyde 3-phosphate: step 2/5. The sequence is that of Phosphoglycerate kinase from Clostridium beijerinckii (strain ATCC 51743 / NCIMB 8052) (Clostridium acetobutylicum).